The primary structure comprises 235 residues: Fibrillarin-like rRNA/tRNA 2'-O-methyltransferase (235 aa).

S-adenosyl-L-methionine is bound by residues 91–92 (TT), 110–111 (EF), 137–138 (DA), and 157–160 (DVAQ).

It belongs to the methyltransferase superfamily. Fibrillarin family. As to quaternary structure, interacts with nop5. Component of box C/D small ribonucleoprotein (sRNP) particles that contain rpl7ae, FlpA and nop5, plus a guide RNA.

Functionally, involved in pre-rRNA and tRNA processing. Utilizes the methyl donor S-adenosyl-L-methionine to catalyze the site-specific 2'-hydroxyl methylation of ribose moieties in rRNA and tRNA. Site specificity is provided by a guide RNA that base pairs with the substrate. Methylation occurs at a characteristic distance from the sequence involved in base pairing with the guide RNA. The chain is Fibrillarin-like rRNA/tRNA 2'-O-methyltransferase from Pyrobaculum islandicum (strain DSM 4184 / JCM 9189 / GEO3).